We begin with the raw amino-acid sequence, 208 residues long: MKVVEVKHPLVKHKIGLMREGDISTKRFRELATEVGSLLTYEATADFETEKVTIEGWNGPVEVDQIKGKKVTVVPILRAGLGMMDGVLEHMPSARISVVGIYRDEETLEPVPYFNKLASNIDERIALVVDPMLATGGSMIATIDLLKEKGCQSIKVLVLVAAPEGIEALEKAHPDVELYTAAIDEKLNDKGYIVPGLGDAGDKIFGTK.

Residues arginine 78, arginine 103, and 130 to 138 (DPMLATGGS) contribute to the 5-phospho-alpha-D-ribose 1-diphosphate site. Residues isoleucine 193 and 198 to 200 (GDA) each bind uracil. Aspartate 199 serves as a coordination point for 5-phospho-alpha-D-ribose 1-diphosphate.

It belongs to the UPRTase family. Mg(2+) is required as a cofactor.

It carries out the reaction UMP + diphosphate = 5-phospho-alpha-D-ribose 1-diphosphate + uracil. It participates in pyrimidine metabolism; UMP biosynthesis via salvage pathway; UMP from uracil: step 1/1. With respect to regulation, allosterically activated by GTP. Its function is as follows. Catalyzes the conversion of uracil and 5-phospho-alpha-D-ribose 1-diphosphate (PRPP) to UMP and diphosphate. In Vibrio parahaemolyticus serotype O3:K6 (strain RIMD 2210633), this protein is Uracil phosphoribosyltransferase.